Consider the following 295-residue polypeptide: 4-hydroxy-tetrahydrodipicolinate synthase (295 aa).

Pyruvate is bound at residue Thr47. Tyr135 (proton donor/acceptor) is an active-site residue. Lys163 functions as the Schiff-base intermediate with substrate in the catalytic mechanism. Ile206 lines the pyruvate pocket.

Belongs to the DapA family. As to quaternary structure, homodimer.

It is found in the cytoplasm. It carries out the reaction L-aspartate 4-semialdehyde + pyruvate = (2S,4S)-4-hydroxy-2,3,4,5-tetrahydrodipicolinate + H2O + H(+). Its pathway is amino-acid biosynthesis; L-lysine biosynthesis via DAP pathway; (S)-tetrahydrodipicolinate from L-aspartate: step 3/4. In terms of biological role, catalyzes the condensation of (S)-aspartate-beta-semialdehyde [(S)-ASA] and pyruvate to 4-hydroxy-tetrahydrodipicolinate (HTPA). The chain is 4-hydroxy-tetrahydrodipicolinate synthase from Staphylococcus aureus (strain Mu50 / ATCC 700699).